Consider the following 142-residue polypeptide: MEMLQGLLLLWLLLNVGGVWTSRGPLRPLCRPINATLAAENEACPVCVTFTTTICAGYCPSMMRVLPAALPPVPQPVCTYRELRFASVRLPGCPPGVDPVVSFPVALSCRCGPCRLSSSDCGGPRAQPLACDRPPLPGLPFL.

A signal peptide spans 1-21; sequence MEMLQGLLLLWLLLNVGGVWT. Cystine bridges form between cysteine 30/cysteine 78, cysteine 44/cysteine 93, cysteine 47/cysteine 131, cysteine 55/cysteine 109, cysteine 59/cysteine 111, and cysteine 114/cysteine 121. An N-linked (GlcNAc...) asparagine glycan is attached at asparagine 34.

The protein belongs to the glycoprotein hormones subunit beta family. Heterodimer of a common alpha chain and a unique beta chain which confers biological specificity to thyrotropin, lutropin, follitropin and gonadotropin.

It is found in the secreted. Functionally, promotes spermatogenesis and ovulation by stimulating the testes and ovaries to synthesize steroids. This chain is Lutropin subunit beta (LHB), found in Panthera tigris altaica (Siberian tiger).